Consider the following 166-residue polypeptide: Co-chaperone protein HscB homolog (166 aa).

The J domain maps to 3 to 75 (QYFTLFRIEP…IDRAAYLLKT (73 aa)).

The protein belongs to the HscB family. In terms of assembly, interacts with HscA and stimulates its ATPase activity.

In terms of biological role, co-chaperone involved in the maturation of iron-sulfur cluster-containing proteins. Seems to help targeting proteins to be folded toward HscA. This Neisseria gonorrhoeae (strain NCCP11945) protein is Co-chaperone protein HscB homolog.